A 194-amino-acid chain; its full sequence is Small ribosomal subunit protein uS4c (194 aa).

Residues 82-143 (MRLDNILFRL…KERSKVLIQN (62 aa)) form the S4 RNA-binding domain.

This sequence belongs to the universal ribosomal protein uS4 family. In terms of assembly, part of the 30S ribosomal subunit. Contacts protein S5. The interaction surface between S4 and S5 is involved in control of translational fidelity.

It localises to the plastid. Its subcellular location is the chloroplast. In terms of biological role, one of the primary rRNA binding proteins, it binds directly to 16S rRNA where it nucleates assembly of the body of the 30S subunit. Its function is as follows. With S5 and S12 plays an important role in translational accuracy. The polypeptide is Small ribosomal subunit protein uS4c (rps4) (Cypella sp. (strain Porto Alegre 027)).